Reading from the N-terminus, the 251-residue chain is Ditrans,polycis-undecaprenyl-diphosphate synthase ((2E,6E)-farnesyl-diphosphate specific) (251 aa).

Residue Asp-26 is part of the active site. Residue Asp-26 participates in Mg(2+) binding. Substrate contacts are provided by residues 27 to 30, Trp-31, Arg-39, His-43, and 71 to 73; these read GNGR and SSE. Asn-74 serves as the catalytic Proton acceptor. Residues Trp-75, Arg-77, Arg-194, and 200 to 202 contribute to the substrate site; that span reads RIS. Residue Glu-213 participates in Mg(2+) binding.

The protein belongs to the UPP synthase family. Homodimer. Mg(2+) serves as cofactor.

It carries out the reaction 8 isopentenyl diphosphate + (2E,6E)-farnesyl diphosphate = di-trans,octa-cis-undecaprenyl diphosphate + 8 diphosphate. Its function is as follows. Catalyzes the sequential condensation of isopentenyl diphosphate (IPP) with (2E,6E)-farnesyl diphosphate (E,E-FPP) to yield (2Z,6Z,10Z,14Z,18Z,22Z,26Z,30Z,34E,38E)-undecaprenyl diphosphate (di-trans,octa-cis-UPP). UPP is the precursor of glycosyl carrier lipid in the biosynthesis of bacterial cell wall polysaccharide components such as peptidoglycan and lipopolysaccharide. The sequence is that of Ditrans,polycis-undecaprenyl-diphosphate synthase ((2E,6E)-farnesyl-diphosphate specific) from Buchnera aphidicola subsp. Acyrthosiphon pisum (strain APS) (Acyrthosiphon pisum symbiotic bacterium).